The sequence spans 413 residues: MGSIIDAAAAADPVVLMETAFRKAVKSRQIPGAVIMARDCSGNLNYTRCFGARTVRRDECNQLPPLQVDTPCRLASATKLLTTIMALQCMERGLVDLDETVDRLLPDLSAMPVLEGFDDAGNARLRERRGKITLRHLLTHTSGLSYVFLHPLLREYMAQGHLQSAEKFGIQSRLAPPAVNDPGAEWIYGANLDWAGKLVERATGLDLEQYLQENICAPLGITDMTFKLQQRPDMLARRADQTHRNSADGRLRYDDSVYFRADGEECFGGQGVFSGPGSYMKVLHSLLKRDGLLLQPQTVDLMFQPALEPRLEEQMNQHMDASPHINYGGPMPMVLRRSFGLGGIIALEDLDGENWRRKGSLTFGGGPNIVWQIDPKAGLCTLAFFQLEPWNDPVCRDLTRTFEHAIYAQYQQG.

Position 73 (Arg73) interacts with monacolin J. Catalysis depends on Ser76, which acts as the Acyl-ester intermediate. Residues Arg173, Tyr188, and Tyr258 each contribute to the monacolin J site. Gly366 contacts 2-methylbutanoate. Positions 388 and 390 each coordinate monacolin J.

It belongs to the class-A beta-lactamase family. Interacts with LovF.

It carries out the reaction monacolin J carboxylate + (S)-2-methylbutanoyl-[2-methylbutanoate polyketide synthase] = lovastatin carboxylate + holo-[2-methylbutanoate polyketide synthase]. Its pathway is polyketide biosynthesis; lovastatin biosynthesis. Functionally, monacolin J acid methylbutanoyltransferase; part of the gene cluster that mediates the biosynthesis of lovastatin (also known as mevinolin, mevacor or monacolin K), a hypolipidemic inhibitor of (3S)-hydroxymethylglutaryl-coenzyme A (HMG-CoA) reductase (HMGR). The first step in the biosynthesis of lovastatin is the production of dihydromonacolin L acid by the lovastatin nonaketide synthase lovB and the trans-acting enoyl reductase lovC via condensation of one acetyl-CoA unit and 8 malonyl-CoA units. Dihydromonacolin L acid is released from lovB by the thioesterase lovG. Next, dihydromonacolin L acid is oxidized by the dihydromonacolin L monooxygenase lovA twice to form monacolin J acid. The 2-methylbutyrate moiety of lovastatin is synthesized by the lovastatin diketide synthase lovF via condensation of one acetyl-CoA unit and one malonyl-CoA unit. Finally, the covalent attachment of this moiety to monacolin J acid is catalyzed by the transesterase lovD to yield lovastatin. LovD has broad substrate specificity and can also convert monacolin J to simvastatin using alpha-dimethylbutanoyl-S-methyl-3-mercaptopropionate (DMB-S-MMP) as the thioester acyl donor, and can also catalyze the reverse reaction and function as hydrolase in vitro. LovD has much higher activity with LovF-bound 2-methylbutanoate than with free diketide substrates. The protein is Monacolin J acid methylbutanoyltransferase of Aspergillus terreus.